Here is a 218-residue protein sequence, read N- to C-terminus: Ras-related protein RabT2 (218 aa).

Residue 32 to 39 (GDYKTGKG) coordinates GTP. The Effector region signature appears at 54–61 (VSSIGVDF). GTP-binding positions include 80-84 (DANSC) and 140-143 (NKCD). Cysteine methyl ester is present on Cys215. Cys215 is lipidated: S-geranylgeranyl cysteine. The propeptide at 216-218 (NIL) is removed in mature form.

This sequence belongs to the small GTPase superfamily. Rab family.

It localises to the cell membrane. This chain is Ras-related protein RabT2 (rabT2), found in Dictyostelium discoideum (Social amoeba).